Consider the following 181-residue polypeptide: MYEYLDRRYALALYKIAEEKGKVEEYLEELKDVTDIINNDTQFLEFIEHPEISTAEKKKTFINVFKGKISEDILSFLLILIDKGRINQLYSKLKEMGKIYLENHNTVIATVKTVIPLEDDERETLTEKLRRKFNKEVLIKEELDPEIIGGVYVEVNNMVIDGTVKSKLSEMKKIMLKGEQR.

Belongs to the ATPase delta chain family. As to quaternary structure, F-type ATPases have 2 components, F(1) - the catalytic core - and F(0) - the membrane proton channel. F(1) has five subunits: alpha(3), beta(3), gamma(1), delta(1), epsilon(1). F(0) has three main subunits: a(1), b(2) and c(10-14). The alpha and beta chains form an alternating ring which encloses part of the gamma chain. F(1) is attached to F(0) by a central stalk formed by the gamma and epsilon chains, while a peripheral stalk is formed by the delta and b chains.

It localises to the cell membrane. In terms of biological role, f(1)F(0) ATP synthase produces ATP from ADP in the presence of a proton or sodium gradient. F-type ATPases consist of two structural domains, F(1) containing the extramembraneous catalytic core and F(0) containing the membrane proton channel, linked together by a central stalk and a peripheral stalk. During catalysis, ATP synthesis in the catalytic domain of F(1) is coupled via a rotary mechanism of the central stalk subunits to proton translocation. Its function is as follows. This protein is part of the stalk that links CF(0) to CF(1). It either transmits conformational changes from CF(0) to CF(1) or is implicated in proton conduction. This is ATP synthase subunit delta from Clostridium kluyveri (strain NBRC 12016).